Consider the following 172-residue polypeptide: Large ribosomal subunit protein uL10 (172 aa).

The protein belongs to the universal ribosomal protein uL10 family. As to quaternary structure, part of the ribosomal stalk of the 50S ribosomal subunit. The N-terminus interacts with L11 and the large rRNA to form the base of the stalk. The C-terminus forms an elongated spine to which L12 dimers bind in a sequential fashion forming a multimeric L10(L12)X complex.

Forms part of the ribosomal stalk, playing a central role in the interaction of the ribosome with GTP-bound translation factors. The polypeptide is Large ribosomal subunit protein uL10 (Rhodopseudomonas palustris (strain BisA53)).